Consider the following 208-residue polypeptide: MVRVKICGVQDPKIGVAAALAGADAIGIVFASSSRRVTPEQAREICQALPPFTARVGIFVDTPQQEVQQIAHFCGLDVIQLHGGESADYCRDLGFRCIKAIPARNRQCLEEANAFPVSALLVDSYVNGKSGGNGCTFNWHLLEGLQLNKPLILAGGLNIENVGRAVAYVRPYGVDVSSGVEVKGQKDIPLIKAFIKRVREVSFNATGS.

It belongs to the TrpF family.

The catalysed reaction is N-(5-phospho-beta-D-ribosyl)anthranilate = 1-(2-carboxyphenylamino)-1-deoxy-D-ribulose 5-phosphate. It functions in the pathway amino-acid biosynthesis; L-tryptophan biosynthesis; L-tryptophan from chorismate: step 3/5. The chain is N-(5'-phosphoribosyl)anthranilate isomerase from Desulforamulus reducens (strain ATCC BAA-1160 / DSM 100696 / MI-1) (Desulfotomaculum reducens).